The primary structure comprises 351 residues: MTIAIGQNQERGVFDLVDDWLKRDRFVFVGWSGLLLFPTAYLAVGGWFTGTTFVTSWYTHGLASSYLEGCNFLTAAVSTPANSMGHSLILLWGPEAQGDFTRWCQIGGLWTFVALHGAFGLIGFCLRQFEIARLVGIRPYNAIAFSGPISIFVSVFLLYPLGQASWFFAPSFGVAAIFRFLLFLQGFHNWTLNPFHMMGVAGILGGALLCAIHGATVENTLFEDGDAANTFRAFTPTQSEETYSMVTANRFWSQIFGVAFSNKRWLHFFMLFVPVTGLWTSAIGIVGLALNLRAYDFVSQELRAAEDPEFETFYTKNILLNEGIRAWMAAQDQPHENFVFPEEVLPRGNAL.

Residues 39–59 (TAYLAVGGWFTGTTFVTSWYT) form a helical membrane-spanning segment. Residue His116 coordinates chlorophyll a. Residues 123–139 (GFCLRQFEIARLVGIRP) traverse the membrane as a helical segment. Pheophytin a is bound by residues Gln128 and Asn141. The chain crosses the membrane as a helical span at residues 151-164 (IFVSVFLLYPLGQA). His196 contacts chlorophyll a. Residues 206–226 (GALLCAIHGATVENTLFEDGD) form a helical membrane-spanning segment. The a plastoquinone site is built by His213 and Phe260. His213 is a Fe cation binding site. A Fe cation-binding site is contributed by His267. Residues 277–293 (GLWTSAIGIVGLALNLR) traverse the membrane as a helical segment.

Belongs to the reaction center PufL/M/PsbA/D family. As to quaternary structure, PSII is composed of 1 copy each of membrane proteins PsbA, PsbB, PsbC, PsbD, PsbE, PsbF, PsbH, PsbI, PsbJ, PsbK, PsbL, PsbM, PsbT, PsbX, PsbY, PsbZ, Psb30/Ycf12, at least 3 peripheral proteins of the oxygen-evolving complex and a large number of cofactors. It forms dimeric complexes. The D1/D2 heterodimer binds P680, chlorophylls that are the primary electron donor of PSII, and subsequent electron acceptors. It shares a non-heme iron and each subunit binds pheophytin, quinone, additional chlorophylls, carotenoids and lipids. There is also a Cl(-1) ion associated with D1 and D2, which is required for oxygen evolution. The PSII complex binds additional chlorophylls, carotenoids and specific lipids. is required as a cofactor.

It localises to the plastid. The protein localises to the chloroplast thylakoid membrane. It catalyses the reaction 2 a plastoquinone + 4 hnu + 2 H2O = 2 a plastoquinol + O2. Its function is as follows. Photosystem II (PSII) is a light-driven water:plastoquinone oxidoreductase that uses light energy to abstract electrons from H(2)O, generating O(2) and a proton gradient subsequently used for ATP formation. It consists of a core antenna complex that captures photons, and an electron transfer chain that converts photonic excitation into a charge separation. The D1/D2 (PsbA/PsbD) reaction center heterodimer binds P680, the primary electron donor of PSII as well as several subsequent electron acceptors. D2 is needed for assembly of a stable PSII complex. The polypeptide is Photosystem II D2 protein (Heterosigma akashiwo (strain NIES-293 / 8280G21-1)).